A 400-amino-acid chain; its full sequence is Serine/threonine transporter SstT (400 aa).

9 helical membrane passes run 14-34 (IIIA…VTPY), 48-68 (SVAP…FQVG), 76-96 (VLLL…IASL), 136-156 (AISE…GLAM), 177-197 (IIHK…AVTF), 211-231 (LLVV…PILV), 285-305 (IPLG…VLTL), 311-331 (LGIH…TISA), and 349-371 (CSLF…IISV).

This sequence belongs to the dicarboxylate/amino acid:cation symporter (DAACS) (TC 2.A.23) family.

Its subcellular location is the cell inner membrane. It catalyses the reaction L-serine(in) + Na(+)(in) = L-serine(out) + Na(+)(out). It carries out the reaction L-threonine(in) + Na(+)(in) = L-threonine(out) + Na(+)(out). Its function is as follows. Involved in the import of serine and threonine into the cell, with the concomitant import of sodium (symport system). This chain is Serine/threonine transporter SstT, found in Acinetobacter baumannii (strain AB307-0294).